Here is a 145-residue protein sequence, read N- to C-terminus: Large ribosomal subunit protein uL11 (145 aa).

Belongs to the universal ribosomal protein uL11 family. As to quaternary structure, part of the ribosomal stalk of the 50S ribosomal subunit. Interacts with L10 and the large rRNA to form the base of the stalk. L10 forms an elongated spine to which L12 dimers bind in a sequential fashion forming a multimeric L10(L12)X complex. In terms of processing, one or more lysine residues are methylated.

Forms part of the ribosomal stalk which helps the ribosome interact with GTP-bound translation factors. This is Large ribosomal subunit protein uL11 from Rickettsia africae (strain ESF-5).